We begin with the raw amino-acid sequence, 544 residues long: Probable protein kinase UbiB (544 aa).

Positions 123–501 (DFDIKPLASA…KRQQGTGKFL (379 aa)) constitute a Protein kinase domain. ATP is bound by residues 129 to 137 (LASASIAQV) and Lys-152. Residue Asp-287 is the Proton acceptor of the active site. The next 2 membrane-spanning stretches (helical) occupy residues 496–516 (GTGKFLFGVGATLVVCSAIWI) and 519–539 (QLEPLAIGSATIGVLCWLLSW).

The protein belongs to the ABC1 family. UbiB subfamily.

It is found in the cell inner membrane. Its pathway is cofactor biosynthesis; ubiquinone biosynthesis [regulation]. Functionally, is probably a protein kinase regulator of UbiI activity which is involved in aerobic coenzyme Q (ubiquinone) biosynthesis. This chain is Probable protein kinase UbiB, found in Vibrio cholerae serotype O1 (strain ATCC 39541 / Classical Ogawa 395 / O395).